The sequence spans 364 residues: DNA polymerase IV (364 aa).

The UmuC domain maps to Ile-14–Gly-198. Residues Asp-18 and Asp-116 each coordinate Mg(2+). Residue Glu-117 is part of the active site.

The protein belongs to the DNA polymerase type-Y family. In terms of assembly, monomer. Mg(2+) is required as a cofactor.

It localises to the cytoplasm. It catalyses the reaction DNA(n) + a 2'-deoxyribonucleoside 5'-triphosphate = DNA(n+1) + diphosphate. In terms of biological role, poorly processive, error-prone DNA polymerase involved in untargeted mutagenesis. Copies undamaged DNA at stalled replication forks, which arise in vivo from mismatched or misaligned primer ends. These misaligned primers can be extended by PolIV. Exhibits no 3'-5' exonuclease (proofreading) activity. May be involved in translesional synthesis, in conjunction with the beta clamp from PolIII. This is DNA polymerase IV from Streptococcus pyogenes serotype M12 (strain MGAS2096).